Consider the following 726-residue polypeptide: Catalase-peroxidase (726 aa).

The tryptophyl-tyrosyl-methioninium (Trp-Tyr) (with M-242) cross-link spans 93 to 216 (WHSAGTYRVH…LAAVQMGLIY (124 aa)). Residue histidine 94 is the Proton acceptor of the active site. The segment at residues 216 to 242 (YVNPEGPNGNPDPVAAAVDIRETFTRM) is a cross-link (tryptophyl-tyrosyl-methioninium (Tyr-Met) (with W-93)). Histidine 257 contributes to the heme b binding site. Residues 471–490 (GSDKRGGANGARIRLSPQKD) form a disordered region.

Belongs to the peroxidase family. Peroxidase/catalase subfamily. As to quaternary structure, homodimer or homotetramer. The cofactor is heme b. Formation of the three residue Trp-Tyr-Met cross-link is important for the catalase, but not the peroxidase activity of the enzyme.

The enzyme catalyses H2O2 + AH2 = A + 2 H2O. The catalysed reaction is 2 H2O2 = O2 + 2 H2O. Its function is as follows. Bifunctional enzyme with both catalase and broad-spectrum peroxidase activity. This chain is Catalase-peroxidase, found in Methylacidiphilum infernorum (isolate V4) (Methylokorus infernorum (strain V4)).